The sequence spans 465 residues: Gamma-aminobutyric acid receptor subunit gamma-1 (465 aa).

A signal peptide spans 1 to 35 (MGPLKAFLFSPFLLRSQSRGVRLVFLLLTLHLGNC). The Extracellular segment spans residues 36 to 273 (VDKADDEDDE…FDLSRRMGYF (238 aa)). Residues N50 and N127 are each glycosylated (N-linked (GlcNAc...) asparagine). An intrachain disulfide couples C188 to C202. The N-linked (GlcNAc...) asparagine glycan is linked to N245. Residues 274–294 (TIQTYIPCILTVVLSWVSFWI) traverse the membrane as a helical segment. The Cytoplasmic portion of the chain corresponds to 295–300 (NKDAVP). The chain crosses the membrane as a helical span at residues 301 to 320 (ARTSLGITTVLTMTTLSTIA). Over 321–328 (RKSLPKVS) the chain is Extracellular. The chain crosses the membrane as a helical span at residues 329–349 (YVTAMDLFVSVCFIFVFAALM). Over 350–444 (EYGTLHYFTS…RIAKIDSYSR (95 aa)) the chain is Cytoplasmic. A helical membrane pass occupies residues 445–465 (IFFPTAFALFNLVYWVGYLYL).

It belongs to the ligand-gated ion channel (TC 1.A.9) family. Gamma-aminobutyric acid receptor (TC 1.A.9.5) subfamily. GABRG1 sub-subfamily. Heteropentamer, formed by a combination of alpha (GABRA1-6), beta (GABRB1-3), gamma (GABRG1-3), delta (GABRD), epsilon (GABRE), rho (GABRR1-3), pi (GABRP) and theta (GABRQ) chains, each subunit exhibiting distinct physiological and pharmacological properties. Post-translationally, may be palmitoylated.

It localises to the postsynaptic cell membrane. The protein localises to the cell membrane. It catalyses the reaction chloride(in) = chloride(out). Its function is as follows. Gamma subunit of the heteropentameric ligand-gated chloride channel gated by gamma-aminobutyric acid (GABA), a major inhibitory neurotransmitter in the brain. GABA-gated chloride channels, also named GABA(A) receptors (GABAAR), consist of five subunits arranged around a central pore and contain GABA active binding site(s) located at the alpha and beta subunit interface(s). When activated by GABA, GABAARs selectively allow the flow of chloride anions across the cell membrane down their electrochemical gradient. Chloride influx into the postsynaptic neuron following GABAAR opening decreases the neuron ability to generate a new action potential, thereby reducing nerve transmission. The chain is Gamma-aminobutyric acid receptor subunit gamma-1 from Homo sapiens (Human).